A 493-amino-acid chain; its full sequence is 1-aminocyclopropane-1-carboxylate synthase CMW33 (493 aa).

Lysine 279 carries the post-translational modification N6-(pyridoxal phosphate)lysine.

This sequence belongs to the class-I pyridoxal-phosphate-dependent aminotransferase family. In terms of assembly, homodimer. It depends on pyridoxal 5'-phosphate as a cofactor.

It catalyses the reaction S-adenosyl-L-methionine = 1-aminocyclopropane-1-carboxylate + S-methyl-5'-thioadenosine + H(+). It functions in the pathway alkene biosynthesis; ethylene biosynthesis via S-adenosyl-L-methionine; ethylene from S-adenosyl-L-methionine: step 1/2. In terms of biological role, catalyzes the formation of 1-aminocyclopropane-1-carboxylate, a direct precursor of ethylene in higher plants. The protein is 1-aminocyclopropane-1-carboxylate synthase CMW33 (ACS1) of Cucurbita maxima (Pumpkin).